Here is a 278-residue protein sequence, read N- to C-terminus: 4-deoxy-L-threo-5-hexosulose-uronate ketol-isomerase (278 aa).

Positions 196, 198, 203, and 245 each coordinate Zn(2+).

It belongs to the KduI family. It depends on Zn(2+) as a cofactor.

The enzyme catalyses 5-dehydro-4-deoxy-D-glucuronate = 3-deoxy-D-glycero-2,5-hexodiulosonate. Its pathway is glycan metabolism; pectin degradation; 2-dehydro-3-deoxy-D-gluconate from pectin: step 4/5. In terms of biological role, catalyzes the isomerization of 5-dehydro-4-deoxy-D-glucuronate to 3-deoxy-D-glycero-2,5-hexodiulosonate. This chain is 4-deoxy-L-threo-5-hexosulose-uronate ketol-isomerase, found in Paraburkholderia phytofirmans (strain DSM 17436 / LMG 22146 / PsJN) (Burkholderia phytofirmans).